The primary structure comprises 825 residues: Glycerol-3-phosphate acyltransferase 1, mitochondrial (825 aa).

Residues methionine 1–glycine 87 are Cytoplasmic-facing. Residues asparagine 80–valine 120 are important for mitochondrial localization. Residues leucine 88–arginine 118 lie within the membrane without spanning it. The Cytoplasmic segment spans residues aspartate 119–leucine 825. The HXXXXD motif signature appears at histidine 230–aspartate 235. CoA is bound by residues arginine 278, arginine 279, lysine 288, arginine 293, and arginine 328. Phosphoserine is present on serine 380. Positions serine 435–alanine 455 are disordered. Arginine 461 is a CoA binding site. Phosphoserine occurs at positions 685 and 692. N6-acetyllysine is present on residues lysine 777 and lysine 781.

It belongs to the GPAT/DAPAT family. Highly expressed in adipose tissues and lung. Low expression in liver.

It is found in the mitochondrion outer membrane. It catalyses the reaction sn-glycerol 3-phosphate + an acyl-CoA = a 1-acyl-sn-glycero-3-phosphate + CoA. The enzyme catalyses (9Z,12Z)-octadecadienoyl-CoA + sn-glycerol 3-phosphate = 1-(9Z,12Z)-octadecadienoyl-sn-glycero-3-phosphate + CoA. It carries out the reaction sn-glycerol 3-phosphate + (9Z)-octadecenoyl-CoA = 1-(9Z-octadecenoyl)-sn-glycero-3-phosphate + CoA. The catalysed reaction is sn-glycerol 3-phosphate + octadecanoyl-CoA = 1-octadecanoyl-sn-glycero-3-phosphate + CoA. It catalyses the reaction sn-glycerol 3-phosphate + hexadecanoyl-CoA = 1-hexadecanoyl-sn-glycero-3-phosphate + CoA. The enzyme catalyses dodecanoyl-CoA + sn-glycerol 3-phosphate = 1-dodecanoyl-sn-glycerol 3-phosphate + CoA. It carries out the reaction 1-acyl-sn-glycero-3-phospho-(1'-sn-glycerol) + an acyl-CoA = a 1,2-diacyl-sn-glycero-3-phospho-(1'-sn-glycerol) + CoA. The protein operates within phospholipid metabolism; CDP-diacylglycerol biosynthesis; CDP-diacylglycerol from sn-glycerol 3-phosphate: step 1/3. Mitochondrial membrane protein that catalyzes the essential first step of biosynthesis of glycerolipids such as triglycerides, phosphatidic acids and lysophosphatidic acids. Esterifies acyl-group from acyl-coenzyme A (acyl-CoA) to the sn-1 position of glycerol-3-phosphate, to produce lysophosphatidic acid. Has a narrow hydrophobic binding cleft that selects for a linear acyl chain. Catalytic activity is higher for substrates with a 16-carbon acyl chain. The sequence is that of Glycerol-3-phosphate acyltransferase 1, mitochondrial from Bos taurus (Bovine).